Here is a 196-residue protein sequence, read N- to C-terminus: Pro-FMRFamide-related neuropeptide VF (196 aa).

The signal sequence occupies residues methionine 1–cysteine 26. A propeptide spanning residues alanine 27–arginine 55 is cleaved from the precursor. The residue at position 92 (phenylalanine 92) is a Phenylalanine amide. 2 consecutive propeptides follow at residues asparagine 95 to glutamate 99 and asparagine 115 to valine 121. Residue phenylalanine 131 is modified to Phenylalanine amide. A propeptide spanning residues threonine 134–lysine 196 is cleaved from the precursor.

This sequence belongs to the FARP (FMRFamide related peptide) family. As to expression, specifically expressed in the retina. In terms of tissue distribution, detected in the hypothalamus.

It is found in the secreted. Its function is as follows. Efficiently inhibits forskolin-induced production of cAMP. Acts as a potent negative regulator of gonadotropin synthesis and secretion. Induces secretion of prolactin. Functionally, efficiently inhibits forskolin-induced production of cAMP. Blocks morphine-induced analgesia. Shows no inhibitory activity of forskolin-induced production of cAMP. This is Pro-FMRFamide-related neuropeptide VF from Homo sapiens (Human).